Consider the following 269-residue polypeptide: Glutamate racemase (269 aa).

Residues Asp14–Ser15 and Tyr46–Ser47 each bind substrate. Cys78 (proton donor/acceptor) is an active-site residue. A substrate-binding site is contributed by Asn79–Thr80. Cys189 acts as the Proton donor/acceptor in catalysis. Thr190–His191 serves as a coordination point for substrate.

It belongs to the aspartate/glutamate racemases family.

The catalysed reaction is L-glutamate = D-glutamate. Its pathway is cell wall biogenesis; peptidoglycan biosynthesis. Functionally, provides the (R)-glutamate required for cell wall biosynthesis. The sequence is that of Glutamate racemase from Haemophilus influenzae (strain PittGG).